The primary structure comprises 163 residues: Cytochrome c-type biogenesis protein CcmE (163 aa).

The Cytoplasmic portion of the chain corresponds to 1–7; that stretch reads MTRKQRR. Residues 8 to 28 form a helical; Signal-anchor for type II membrane protein membrane-spanning segment; that stretch reads LVFIGTCGAVLAVALGLVLWA. Over 29–163 the chain is Periplasmic; sequence MSGTIVFFRS…RTASGEARAP (135 aa). 2 residues coordinate heme: His122 and Tyr126. The tract at residues 134–163 is disordered; it reads ALKKSGRWQEGAGHPAPAPPRTASGEARAP.

Belongs to the CcmE/CycJ family.

It localises to the cell inner membrane. Heme chaperone required for the biogenesis of c-type cytochromes. Transiently binds heme delivered by CcmC and transfers the heme to apo-cytochromes in a process facilitated by CcmF and CcmH. The sequence is that of Cytochrome c-type biogenesis protein CcmE from Methylobacterium sp. (strain 4-46).